Here is a 441-residue protein sequence, read N- to C-terminus: 4-hydroxy-3-methylbut-2-en-1-yl diphosphate synthase (flavodoxin) (441 aa).

[4Fe-4S] cluster contacts are provided by cysteine 320, cysteine 323, cysteine 366, and glutamate 373.

It belongs to the IspG family. The cofactor is [4Fe-4S] cluster.

The enzyme catalyses (2E)-4-hydroxy-3-methylbut-2-enyl diphosphate + oxidized [flavodoxin] + H2O + 2 H(+) = 2-C-methyl-D-erythritol 2,4-cyclic diphosphate + reduced [flavodoxin]. It participates in isoprenoid biosynthesis; isopentenyl diphosphate biosynthesis via DXP pathway; isopentenyl diphosphate from 1-deoxy-D-xylulose 5-phosphate: step 5/6. Converts 2C-methyl-D-erythritol 2,4-cyclodiphosphate (ME-2,4cPP) into 1-hydroxy-2-methyl-2-(E)-butenyl 4-diphosphate. This is 4-hydroxy-3-methylbut-2-en-1-yl diphosphate synthase (flavodoxin) from Rhodopseudomonas palustris (strain ATCC BAA-98 / CGA009).